Reading from the N-terminus, the 195-residue chain is ATP-dependent Clp protease proteolytic subunit (195 aa).

Serine 98 acts as the Nucleophile in catalysis. Residue histidine 123 is part of the active site.

It belongs to the peptidase S14 family. In terms of assembly, fourteen ClpP subunits assemble into 2 heptameric rings which stack back to back to give a disk-like structure with a central cavity, resembling the structure of eukaryotic proteasomes.

The protein localises to the cytoplasm. The enzyme catalyses Hydrolysis of proteins to small peptides in the presence of ATP and magnesium. alpha-casein is the usual test substrate. In the absence of ATP, only oligopeptides shorter than five residues are hydrolyzed (such as succinyl-Leu-Tyr-|-NHMec, and Leu-Tyr-Leu-|-Tyr-Trp, in which cleavage of the -Tyr-|-Leu- and -Tyr-|-Trp bonds also occurs).. Cleaves peptides in various proteins in a process that requires ATP hydrolysis. Has a chymotrypsin-like activity. Plays a major role in the degradation of misfolded proteins. The sequence is that of ATP-dependent Clp protease proteolytic subunit from Staphylococcus haemolyticus (strain JCSC1435).